Reading from the N-terminus, the 534-residue chain is MICLGIEGTAEKCGIGIVDSDGNILATCGCQLYPEVGGIHPREAANFHAEHIVPLIREALEESNLSINDIDLVSFAKGPGLGPALRTVATAARSLSQNIGVPLIGVNHCIGHVEIGKLTTGAKDPLTLYTSGGNTQIISYESGRYRIIGETLDIAIGNCLDQFSRDIGLGHPGGPIVEKHAENTNKTIELPYVVKGMDLSFSGILTSAINKYKQGVDLDVICNSFQQTCFAMLCEVTERAISYTGKNEVLLCGGVAANSKLRQMLQVMCEDHYVDFYMPPMKYCGDNGSMIARVGLLSYDENKCGIENSYINPKYRTDQVEVTWIKDNFQHNINLPDNIKEKGAEADIIEGIWDEREVIIKHRVKKKYRVDKLDEKLRLERTKEEAKLLSDCKKYGVTTPYIYSIDLNRKDIILEKIDAPKLHEIINTDKDIKKIFTNIGEMVFKMHEGEIIHGDLTTANILIKDDKPIFIDFGLGKYSNLLEDKGTDLLVFKKSLNTIIPEKSEELFNYFLNGYDNEDVIKKIDEIEKRGRYL.

Positions 1–324 (MICLGIEGTA…YRTDQVEVTW (324 aa)) are kae1. Fe cation is bound by residues H108, H112, and Y129. Residues 129-133 (YTSGG), D161, G174, E178, and N258 contribute to the L-threonylcarbamoyladenylate site. D286 is a binding site for Fe cation. In terms of domain architecture, Protein kinase spans 335–534 (LPDNIKEKGA…DEIEKRGRYL (200 aa)). Residues 340–348 (KEKGAEADI) and K361 each bind ATP. D455 serves as the catalytic Proton acceptor; for kinase activity.

This sequence in the N-terminal section; belongs to the KAE1 / TsaD family. In the C-terminal section; belongs to the protein kinase superfamily. Tyr protein kinase family. BUD32 subfamily. Component of the KEOPS complex that consists of Kae1, Bud32, Cgi121 and Pcc1; the whole complex dimerizes. Requires Fe(2+) as cofactor.

It localises to the cytoplasm. The catalysed reaction is L-seryl-[protein] + ATP = O-phospho-L-seryl-[protein] + ADP + H(+). It carries out the reaction L-threonyl-[protein] + ATP = O-phospho-L-threonyl-[protein] + ADP + H(+). It catalyses the reaction L-threonylcarbamoyladenylate + adenosine(37) in tRNA = N(6)-L-threonylcarbamoyladenosine(37) in tRNA + AMP + H(+). Required for the formation of a threonylcarbamoyl group on adenosine at position 37 (t(6)A37) in tRNAs that read codons beginning with adenine. Is a component of the KEOPS complex that is probably involved in the transfer of the threonylcarbamoyl moiety of threonylcarbamoyl-AMP (TC-AMP) to the N6 group of A37. The Kae1 domain likely plays a direct catalytic role in this reaction. The Bud32 domain probably displays kinase activity that regulates Kae1 function. The polypeptide is Probable bifunctional tRNA threonylcarbamoyladenosine biosynthesis protein (Methanosphaera stadtmanae (strain ATCC 43021 / DSM 3091 / JCM 11832 / MCB-3)).